A 188-amino-acid polypeptide reads, in one-letter code: Glandular kallikrein-3, submandibular (188 aa).

Positions 1–185 constitute a Peptidase S1 domain; that stretch reads NYHVLLGQNN…FTSWIKEVMK (185 aa). N-linked (GlcNAc...) asparagine glycans are attached at residues Asn10 and Asn36. Asp47 functions as the Charge relay system in the catalytic mechanism. 3 disulfides stabilise this stretch: Cys79-Cys146, Cys111-Cys125, and Cys136-Cys161. The active-site Charge relay system is the Ser140.

This sequence belongs to the peptidase S1 family. Kallikrein subfamily.

The catalysed reaction is Preferential cleavage of Arg-|-Xaa bonds in small molecule substrates. Highly selective action to release kallidin (lysyl-bradykinin) from kininogen involves hydrolysis of Met-|-Xaa or Leu-|-Xaa.. Its function is as follows. Glandular kallikreins cleave Met-Lys and Arg-Ser bonds in kininogen to release Lys-bradykinin. The sequence is that of Glandular kallikrein-3, submandibular (Klk3) from Rattus norvegicus (Rat).